The sequence spans 351 residues: V-type proton ATPase subunit d1 (351 aa).

The protein belongs to the V-ATPase V0D/AC39 subunit family. V-ATPase is a heteromultimeric enzyme composed of a peripheral catalytic V1 complex (components A to H) attached to an integral membrane V0 proton pore complex (components: a, c, c'', d and e).

Its subcellular location is the vacuole membrane. Functionally, subunit of the integral membrane V0 complex of vacuolar ATPase. Vacuolar ATPase is responsible for acidifying a variety of intracellular compartments in eukaryotic cells, thus providing most of the energy required for transport processes in the vacuolar system. The chain is V-type proton ATPase subunit d1 (VHA-d1) from Arabidopsis thaliana (Mouse-ear cress).